Consider the following 258-residue polypeptide: 2-oxo-tetronate isomerase (258 aa).

The active-site Proton donor/acceptor is E143. Residues E143, D178, Q204, and E240 each contribute to the Mg(2+) site. E240 (proton donor/acceptor) is an active-site residue.

It belongs to the hyi family. OtnI subfamily.

It carries out the reaction 2-dehydro-L-erythronate = 3-dehydro-L-erythronate. It catalyses the reaction 2-dehydro-D-erythronate = 3-dehydro-D-erythronate. Functionally, catalyzes the isomerization of 2-oxo-tetronate to 3-oxo-tetronate. This Haemophilus influenzae (strain ATCC 51907 / DSM 11121 / KW20 / Rd) protein is 2-oxo-tetronate isomerase.